Here is a 689-residue protein sequence, read N- to C-terminus: Methionine--tRNA ligase (689 aa).

The 'HIGH' region motif lies at 16–26 (PYANAGLHLGH). The Zn(2+) site is built by Cys-147, Cys-150, Cys-160, and Cys-163. Positions 342–346 (KMSKS) match the 'KMSKS' region motif. Lys-345 is a binding site for ATP. Residues 585–689 (DFAKVDLRVG…AGVKPGMRVG (105 aa)) form the tRNA-binding domain.

Belongs to the class-I aminoacyl-tRNA synthetase family. MetG type 1 subfamily. As to quaternary structure, homodimer. Zn(2+) serves as cofactor.

It localises to the cytoplasm. It carries out the reaction tRNA(Met) + L-methionine + ATP = L-methionyl-tRNA(Met) + AMP + diphosphate. Is required not only for elongation of protein synthesis but also for the initiation of all mRNA translation through initiator tRNA(fMet) aminoacylation. The polypeptide is Methionine--tRNA ligase (Chromobacterium violaceum (strain ATCC 12472 / DSM 30191 / JCM 1249 / CCUG 213 / NBRC 12614 / NCIMB 9131 / NCTC 9757 / MK)).